The primary structure comprises 213 residues: ATP-dependent Clp protease proteolytic subunit (213 aa).

The active-site Nucleophile is the S114. H139 is a catalytic residue.

The protein belongs to the peptidase S14 family. As to quaternary structure, fourteen ClpP subunits assemble into 2 heptameric rings which stack back to back to give a disk-like structure with a central cavity, resembling the structure of eukaryotic proteasomes.

Its subcellular location is the cytoplasm. It catalyses the reaction Hydrolysis of proteins to small peptides in the presence of ATP and magnesium. alpha-casein is the usual test substrate. In the absence of ATP, only oligopeptides shorter than five residues are hydrolyzed (such as succinyl-Leu-Tyr-|-NHMec, and Leu-Tyr-Leu-|-Tyr-Trp, in which cleavage of the -Tyr-|-Leu- and -Tyr-|-Trp bonds also occurs).. Its function is as follows. Cleaves peptides in various proteins in a process that requires ATP hydrolysis. Has a chymotrypsin-like activity. Plays a major role in the degradation of misfolded proteins. In Methylobacillus flagellatus (strain ATCC 51484 / DSM 6875 / VKM B-1610 / KT), this protein is ATP-dependent Clp protease proteolytic subunit.